The following is a 350-amino-acid chain: Calcium uniporter protein, mitochondrial (350 aa).

A mitochondrion-targeting transit peptide spans 1–49 (MAAAAGRSLLLLLCSRGGGGGAGGCGALTAGCFPGLGVSRHRPHQQHRT). Residues 50–232 (AHQRPASWQS…ISRKAEKRTT (183 aa)) are Mitochondrial matrix-facing. Phosphoserine; by CaMK2 occurs at positions 56 and 91. The N-terminal MCU domain stretch occupies residues 74-164 (VTVVYQNGLP…LTYHVRPPKR (91 aa)). Cysteine 96 carries the S-glutathionyl cysteine modification. A coiled-coil region spans residues 191-220 (IEQHQLNKERELVERLEDLKQQLAPLEKVR). The chain crosses the membrane as a helical span at residues 233-256 (LVLWGGLAYMATQFGILARLTWWE). Over 257–264 (YSWDIMEP) the chain is Mitochondrial intermembrane. The short motif at 259-267 (WDIMEPVTY) is the Selectivity filter element. Ca(2+) is bound at residue glutamate 263. The helical transmembrane segment at 265-282 (VTYFITYGSAMAMYAYFV) threads the bilayer. Residues 283–350 (MTRQEYVYPE…LPLRQIGEKE (68 aa)) lie on the Mitochondrial matrix side of the membrane. A juxtamembrane helix region spans residues 284–289 (TRQEYV). Residues 310 to 338 (RFDLEKYNQLKDAIAQAEMDLKRLRDPLQ) are a coiled coil. Lysine 331 carries the N6-acetyllysine modification.

Belongs to the MCU (TC 1.A.77) family. Homotetramer. Component of the uniplex complex, composed of MCU, EMRE/SMDT1, MICU1 and MICU2 (or MICU3) in a 4:4:1:1 stoichiometry. Interacts with CCDC109B/MCUB; this inhibits channel activity. Interacts with MCUR1. Interactions with MICU1 and MCUR1 are mutually exclusive. Interacts with SLC25A23. Post-translationally, phosphorylation by CaMK2 in heart leads to increased MCU current. The regulation of MCU by CaMK2 is however subject to discussion: another group was unable to reproduce these results. Phosphorylated on tyrosines by PTK2B/PYK2, promoting oligomerization. In terms of processing, glutathionylation at Cys-96 in response to reactive oxygen species (ROS) promotes MCU higher-order assembly, leading to constitutive activation of the MCU channel and mitochondrial calcium overload. Undergoes proteolytic degradation by SPG7. As to expression, detected in heart muscle (at protein level). Expressed in skeletal muscle, heart, kidney, liver, brain, lung, white fat and spleen.

The protein resides in the mitochondrion inner membrane. The enzyme catalyses Ca(2+)(in) = Ca(2+)(out). With respect to regulation, MCU channel activity is regulated by the heterodimer composed of MICU1 and either MICU2 or MICU3, which act as calcium-sensors. At low calcium levels, MICU1 occludes the pore of the MCU channel, preventing mitochondrial calcium uptake. At higher calcium levels, calcium-binding to MICU1 and MICU2 (or MICU3) induces a conformational change that weakens MCU-MICU1 interactions and moves the MICU1-MICU2 heterodimer away from the pore, allowing calcium permeation through the channel. MCU channel activity is gated by EMRE/SMDT1 via the juxtamembrane helix loop. Inhibited by ruthenium red or its derivative Ru360. Its function is as follows. Channel-forming and calcium-conducting subunit of the mitochondrial inner membrane calcium uniporter complex (uniplex), which mediates calcium uptake into the mitochondrial matrix. MCU channel activity is regulated by the calcium-sensor subunits of the uniplex MICU1 and MICU2 (or MICU3). Mitochondrial calcium homeostasis plays key roles in cellular physiology and regulates ATP production, cytoplasmic calcium signals and activation of cell death pathways. Involved in buffering the amplitude of systolic calcium rises in cardiomyocytes. While dispensable for baseline homeostatic cardiac function, acts as a key regulator of short-term mitochondrial calcium loading underlying a 'fight-or-flight' response during acute stress: acts by mediating a rapid increase of mitochondrial calcium in pacemaker cells. Participates in mitochondrial permeability transition during ischemia-reperfusion injury. Mitochondrial calcium uptake in skeletal muscle cells is involved in muscle size in adults. Regulates synaptic vesicle endocytosis kinetics in central nerve terminal. Regulates glucose-dependent insulin secretion in pancreatic beta-cells by regulating mitochondrial calcium uptake. Involved in antigen processing and presentation. The protein is Calcium uniporter protein, mitochondrial of Mus musculus (Mouse).